The sequence spans 341 residues: Glucokinase (341 aa).

Residue 18 to 23 (GDIGGT) coordinates ATP.

It belongs to the bacterial glucokinase family.

The protein localises to the cytoplasm. The enzyme catalyses D-glucose + ATP = D-glucose 6-phosphate + ADP + H(+). The chain is Glucokinase from Rhizobium johnstonii (strain DSM 114642 / LMG 32736 / 3841) (Rhizobium leguminosarum bv. viciae).